The chain runs to 129 residues: Glycine cleavage system H protein (129 aa).

In terms of domain architecture, Lipoyl-binding spans 23–104 (TATIGITQHA…AYAAWLFRLK (82 aa)). Position 64 is an N6-lipoyllysine (Lys-64).

This sequence belongs to the GcvH family. As to quaternary structure, the glycine cleavage system is composed of four proteins: P, T, L and H. The cofactor is (R)-lipoate.

Its function is as follows. The glycine cleavage system catalyzes the degradation of glycine. The H protein shuttles the methylamine group of glycine from the P protein to the T protein. The chain is Glycine cleavage system H protein from Nitrosospira multiformis (strain ATCC 25196 / NCIMB 11849 / C 71).